Reading from the N-terminus, the 288-residue chain is Shikimate dehydrogenase (NADP(+)) (288 aa).

Residues 21–23 (SLS) and T68 contribute to the shikimate site. Residue K72 is the Proton acceptor of the active site. Residue E84 coordinates NADP(+). Residues N93 and D108 each contribute to the shikimate site. NADP(+)-binding positions include 132–136 (GNGGA) and L230. Y232 is a shikimate binding site. Position 253 (G253) interacts with NADP(+).

The protein belongs to the shikimate dehydrogenase family. In terms of assembly, homodimer.

The catalysed reaction is shikimate + NADP(+) = 3-dehydroshikimate + NADPH + H(+). It participates in metabolic intermediate biosynthesis; chorismate biosynthesis; chorismate from D-erythrose 4-phosphate and phosphoenolpyruvate: step 4/7. In terms of biological role, involved in the biosynthesis of the chorismate, which leads to the biosynthesis of aromatic amino acids. Catalyzes the reversible NADPH linked reduction of 3-dehydroshikimate (DHSA) to yield shikimate (SA). The protein is Shikimate dehydrogenase (NADP(+)) of Gloeothece citriformis (strain PCC 7424) (Cyanothece sp. (strain PCC 7424)).